Here is a 153-residue protein sequence, read N- to C-terminus: Prostaglandin E synthase (153 aa).

Residues 1 to 13 (MTSLGLVMENSQV) are Lumenal-facing. Residues 14-42 (LPAFLLCSTLLVIKMYAVAVITGQVRLRK) form a helical membrane-spanning segment. Arg39 is a binding site for glutathione. Residues 43-61 (KAFANPEDALKRGGLQYCR) lie on the Cytoplasmic side of the membrane. A helical transmembrane segment spans residues 62-91 (SDPDVERCLRAHRNDMETIYPFLFLGFVYS). A glutathione-binding site is contributed by 74–78 (RNDME). Residues 92-98 (FLGPNPL) are Lumenal-facing. A helical membrane pass occupies residues 99 to 120 (IAWIHFLVVLTGRVVHTVAYLG). Glutathione contacts are provided by His114 and Tyr118. Residues 121 to 124 (KMNP) lie on the Cytoplasmic side of the membrane. A helical transmembrane segment spans residues 125–153 (RIRSGAYVLAQFACFSMALQILWEVAHHL). Residue 127–131 (RSGAY) participates in glutathione binding.

The protein belongs to the MAPEG family. Requires glutathione as cofactor.

Its subcellular location is the membrane. The protein resides in the cytoplasm. It localises to the perinuclear region. The enzyme catalyses prostaglandin H2 = prostaglandin E2. It catalyses the reaction 2-glyceryl-prostaglandin H2 = 2-glyceryl-prostaglandin E2. It carries out the reaction prostaglandin G2 = (15S)-15-hydroperoxy-prostaglandin E2. The catalysed reaction is 1-chloro-2,4-dinitrobenzene + glutathione = 2,4-dinitrophenyl-S-glutathione + chloride + H(+). The enzyme catalyses (5S)-hydroperoxy-(6E,8Z,11Z,14Z)-eicosatetraenoate + 2 glutathione = (5S)-hydroxy-(6E,8Z,11Z,14Z)-eicosatetraenoate + glutathione disulfide + H2O. Its pathway is lipid metabolism; prostaglandin biosynthesis. With respect to regulation, activity is increased following LPS stimulation and down-regulated by the anti-inflammatory glucocorticoid dexamethasone. In terms of biological role, terminal enzyme of the cyclooxygenase (COX)-2-mediated prostaglandin E2 (PGE2) biosynthetic pathway. Catalyzes the glutathione-dependent oxidoreduction of prostaglandin endoperoxide H2 (PGH2) to prostaglandin E2 (PGE2) in response to inflammatory stimuli. Plays a key role in inflammation response, fever and pain. Also catalyzes the oxidoreduction of endocannabinoids into prostaglandin glycerol esters and PGG2 into 15-hydroperoxy-PGE2. In addition, displays low glutathione transferase and glutathione-dependent peroxidase activities, toward 1-chloro-2,4-dinitrobenzene and 5-hydroperoxyicosatetraenoic acid (5-HPETE), respectively. The polypeptide is Prostaglandin E synthase (Ptges) (Rattus norvegicus (Rat)).